We begin with the raw amino-acid sequence, 383 residues long: Probable disease resistance protein At4g19060 (383 aa).

The tract at residues 36 to 84 (YEKWSSGKQRGSSSKHGNQSTHGDSSPTRNSSGSSKKGRPKANRVETSS) is disordered. Residues 41-70 (SGKQRGSSSKHGNQSTHGDSSPTRNSSGSS) are compositionally biased toward polar residues. 2 consecutive NB-ARC domains span residues 75–184 (PKAN…MFKH) and 207–281 (VKEK…LAKA). 121–128 (GKYGVGKT) contacts ATP.

Its function is as follows. Possible disease resistance protein. This Arabidopsis thaliana (Mouse-ear cress) protein is Probable disease resistance protein At4g19060.